The sequence spans 209 residues: Ribosomal RNA large subunit methyltransferase E (209 aa).

S-adenosyl-L-methionine contacts are provided by glycine 63, tryptophan 65, aspartate 83, aspartate 99, and aspartate 124. Catalysis depends on lysine 164, which acts as the Proton acceptor.

The protein belongs to the class I-like SAM-binding methyltransferase superfamily. RNA methyltransferase RlmE family.

It is found in the cytoplasm. The catalysed reaction is uridine(2552) in 23S rRNA + S-adenosyl-L-methionine = 2'-O-methyluridine(2552) in 23S rRNA + S-adenosyl-L-homocysteine + H(+). Its function is as follows. Specifically methylates the uridine in position 2552 of 23S rRNA at the 2'-O position of the ribose in the fully assembled 50S ribosomal subunit. In Proteus mirabilis (strain HI4320), this protein is Ribosomal RNA large subunit methyltransferase E.